The chain runs to 691 residues: Elongation factor G (691 aa).

The region spanning 8–282 is the tr-type G domain; sequence EKTRNIGIMA…AVVDYLPSPV (275 aa). GTP is bound by residues 17–24, 81–85, and 135–138; these read AHIDAGKT, DTPGH, and NKMD.

This sequence belongs to the TRAFAC class translation factor GTPase superfamily. Classic translation factor GTPase family. EF-G/EF-2 subfamily.

The protein localises to the cytoplasm. In terms of biological role, catalyzes the GTP-dependent ribosomal translocation step during translation elongation. During this step, the ribosome changes from the pre-translocational (PRE) to the post-translocational (POST) state as the newly formed A-site-bound peptidyl-tRNA and P-site-bound deacylated tRNA move to the P and E sites, respectively. Catalyzes the coordinated movement of the two tRNA molecules, the mRNA and conformational changes in the ribosome. This chain is Elongation factor G, found in Caldicellulosiruptor saccharolyticus (strain ATCC 43494 / DSM 8903 / Tp8T 6331).